The chain runs to 528 residues: Light-independent protochlorophyllide reductase subunit B (528 aa).

D36 provides a ligand contact to [4Fe-4S] cluster. D274 (proton donor) is an active-site residue. 409-410 (GL) provides a ligand contact to substrate. The interval 429-471 (GPSHHGGHAPKPMHDAPAASAAAGAEASMAEETAAPSQDAPAA) is disordered. Low complexity predominate over residues 444–465 (APAASAAAGAEASMAEETAAPS).

It belongs to the ChlB/BchB/BchZ family. As to quaternary structure, protochlorophyllide reductase is composed of three subunits; BchL, BchN and BchB. Forms a heterotetramer of two BchB and two BchN subunits. It depends on [4Fe-4S] cluster as a cofactor.

The catalysed reaction is chlorophyllide a + oxidized 2[4Fe-4S]-[ferredoxin] + 2 ADP + 2 phosphate = protochlorophyllide a + reduced 2[4Fe-4S]-[ferredoxin] + 2 ATP + 2 H2O. It participates in porphyrin-containing compound metabolism; bacteriochlorophyll biosynthesis (light-independent). Component of the dark-operative protochlorophyllide reductase (DPOR) that uses Mg-ATP and reduced ferredoxin to reduce ring D of protochlorophyllide (Pchlide) to form chlorophyllide a (Chlide). This reaction is light-independent. The NB-protein (BchN-BchB) is the catalytic component of the complex. The protein is Light-independent protochlorophyllide reductase subunit B of Dinoroseobacter shibae (strain DSM 16493 / NCIMB 14021 / DFL 12).